A 388-amino-acid polypeptide reads, in one-letter code: Chaperone protein DnaJ (388 aa).

One can recognise a J domain in the interval Asp-5–Gly-69. A CR-type zinc finger spans residues Gly-145–Lys-227. Zn(2+) contacts are provided by Cys-158, Cys-161, Cys-175, Cys-178, Cys-201, Cys-204, Cys-215, and Cys-218. 4 CXXCXGXG motif repeats span residues Cys-158–Gly-165, Cys-175–Gly-182, Cys-201–Gly-208, and Cys-215–Gly-222.

It belongs to the DnaJ family. As to quaternary structure, homodimer. Requires Zn(2+) as cofactor.

The protein resides in the cytoplasm. Its function is as follows. Participates actively in the response to hyperosmotic and heat shock by preventing the aggregation of stress-denatured proteins and by disaggregating proteins, also in an autonomous, DnaK-independent fashion. Unfolded proteins bind initially to DnaJ; upon interaction with the DnaJ-bound protein, DnaK hydrolyzes its bound ATP, resulting in the formation of a stable complex. GrpE releases ADP from DnaK; ATP binding to DnaK triggers the release of the substrate protein, thus completing the reaction cycle. Several rounds of ATP-dependent interactions between DnaJ, DnaK and GrpE are required for fully efficient folding. Also involved, together with DnaK and GrpE, in the DNA replication of plasmids through activation of initiation proteins. The sequence is that of Chaperone protein DnaJ from Lactobacillus johnsonii (strain CNCM I-12250 / La1 / NCC 533).